Reading from the N-terminus, the 81-residue chain is Cytotoxin 8 (81 aa).

An N-terminal signal peptide occupies residues 1-21; the sequence is MKTLLLTLVVVTIVCLDLGYT. Intrachain disulfides connect cysteine 24/cysteine 42, cysteine 35/cysteine 59, cysteine 63/cysteine 74, and cysteine 75/cysteine 80.

The protein belongs to the three-finger toxin family. Short-chain subfamily. Type IA cytotoxin sub-subfamily. As to quaternary structure, monomer in solution; Homodimer and oligomer in the presence of negatively charged lipids forming a pore with a size ranging between 20 and 30 Angstroms. As to expression, expressed by the venom gland.

The protein localises to the secreted. Its subcellular location is the target cell membrane. Shows cytolytic activity on many different cells by forming pore in lipid membranes. In vivo, increases heart rate or kills the animal by cardiac arrest. In addition, it binds to heparin with high affinity, interacts with Kv channel-interacting protein 1 (KCNIP1) in a calcium-independent manner, and binds to integrin alpha-V/beta-3 (ITGAV/ITGB3) with moderate affinity. This chain is Cytotoxin 8, found in Naja atra (Chinese cobra).